The sequence spans 209 residues: Ubiquitin-conjugating enzyme E2 S (209 aa).

The UBC core domain occupies 14 to 160; it reads QTIRQVMREL…ARMMTEIHAQ (147 aa). Cys98 acts as the Glycyl thioester intermediate in catalysis. The tract at residues 165–194 is disordered; the sequence is GVGAASDAKDDDGPSTKKHAGLDKKLQDKK. Over residues 171 to 194 the composition is skewed to basic and acidic residues; the sequence is DAKDDDGPSTKKHAGLDKKLQDKK.

Belongs to the ubiquitin-conjugating enzyme family.

The catalysed reaction is S-ubiquitinyl-[E1 ubiquitin-activating enzyme]-L-cysteine + [E2 ubiquitin-conjugating enzyme]-L-cysteine = [E1 ubiquitin-activating enzyme]-L-cysteine + S-ubiquitinyl-[E2 ubiquitin-conjugating enzyme]-L-cysteine.. Its pathway is protein modification; protein ubiquitination. Functionally, catalyzes the covalent attachment of ubiquitin to other proteins. Acts as an essential factor of the anaphase promoting complex/cyclosome (APC/C), a cell cycle-regulated ubiquitin ligase that controls progression through mitosis. Acts by specifically elongating polyubiquitin chains initiated by the E2 enzyme vih/UbcH10 on APC/C substrates, enhancing the degradation of APC/C substrates by the proteasome and promoting mitotic exit. The chain is Ubiquitin-conjugating enzyme E2 S from Drosophila persimilis (Fruit fly).